We begin with the raw amino-acid sequence, 227 residues long: Cytidylate kinase (227 aa).

Residue 12–20 (GPSGAGKGT) participates in ATP binding.

Belongs to the cytidylate kinase family. Type 1 subfamily.

It is found in the cytoplasm. It catalyses the reaction CMP + ATP = CDP + ADP. The catalysed reaction is dCMP + ATP = dCDP + ADP. The chain is Cytidylate kinase from Shigella flexneri.